We begin with the raw amino-acid sequence, 259 residues long: Small ribosomal subunit protein mS23 (259 aa).

The protein belongs to the mitochondrion-specific ribosomal protein mS23 family. In terms of assembly, component of the mitochondrial small ribosomal subunit.

Its subcellular location is the mitochondrion. This Pyricularia oryzae (strain 70-15 / ATCC MYA-4617 / FGSC 8958) (Rice blast fungus) protein is Small ribosomal subunit protein mS23 (RSM25).